The primary structure comprises 326 residues: S-methyl-5'-thioadenosine phosphorylase (326 aa).

Phosphate is bound by residues S44, R86–H87, and S119–A120. M220 lines the substrate pocket. Position 221 (T221) interacts with phosphate. D244–D246 is a binding site for substrate.

The protein belongs to the PNP/MTAP phosphorylase family. MTAP subfamily. In terms of assembly, homohexamer. Dimer of a homotrimer.

The enzyme catalyses S-methyl-5'-thioadenosine + phosphate = 5-(methylsulfanyl)-alpha-D-ribose 1-phosphate + adenine. The protein operates within amino-acid biosynthesis; L-methionine biosynthesis via salvage pathway; S-methyl-5-thio-alpha-D-ribose 1-phosphate from S-methyl-5'-thioadenosine (phosphorylase route): step 1/1. In terms of biological role, catalyzes the reversible phosphorylation of S-methyl-5'-thioadenosine (MTA) to adenine and 5-methylthioribose-1-phosphate. Involved in the breakdown of MTA, a major by-product of polyamine biosynthesis. Responsible for the first step in the methionine salvage pathway after MTA has been generated from S-adenosylmethionine. Has broad substrate specificity with 6-aminopurine nucleosides as preferred substrates. The sequence is that of S-methyl-5'-thioadenosine phosphorylase from Synechocystis sp. (strain PCC 6803 / GT-S).